The following is a 601-amino-acid chain: RNA-binding protein MEX3B (601 aa).

2 disordered regions span residues 1-39 (MPSS…DDQR) and 90-109 (GRQG…ISPT). Serine 4 carries the post-translational modification Phosphoserine. Residues 13–33 (GSGGGGGGGGGGGGGGSGGGE) show a composition bias toward gly residues. 2 KH domains span residues 98 to 159 (DGDR…RREI) and 192 to 253 (QTTI…REEI). Disordered regions lie at residues 284–332 (LHHG…TDSY) and 344–448 (TSRL…GGAS). Phosphoserine is present on serine 320. Low complexity-rich tracts occupy residues 320 to 331 (SSSSLGSASTDS) and 362 to 371 (NGNNNNNGNG). Residues 395–404 (DPAPAPPPGT) are compositionally biased toward pro residues. Residues 420–442 (AAPVSSSCSSSASSSASSSSVVF) are compositionally biased toward low complexity. Serine 494 carries the phosphoserine modification. The interval 514-546 (LPGLPSSDTSGSSSSSSSSSSSSSSSSGLRRKG) is disordered. Low complexity predominate over residues 519–540 (SSDTSGSSSSSSSSSSSSSSSS). The segment at 550–590 (CSVCFESEVIAALVPCGHNLFCMECANRICEKSEPECPVCH) adopts an RING-type zinc-finger fold.

Phosphorylation at Ser-494 creates a docking site for 14-3-3, which stabilizes the protein and modulates its ability to bind RNA.

Its subcellular location is the cytoplasm. The protein localises to the nucleus. The protein resides in the P-body. It is found in the cytoplasmic granule. Its function is as follows. RNA-binding protein. May be involved in post-transcriptional regulatory mechanisms. This chain is RNA-binding protein MEX3B (Mex3b), found in Mus musculus (Mouse).